The primary structure comprises 158 residues: NAD(P)H-quinone oxidoreductase subunit J, chloroplastic (158 aa).

It belongs to the complex I 30 kDa subunit family. As to quaternary structure, NDH is composed of at least 16 different subunits, 5 of which are encoded in the nucleus.

It is found in the plastid. It localises to the chloroplast thylakoid membrane. The catalysed reaction is a plastoquinone + NADH + (n+1) H(+)(in) = a plastoquinol + NAD(+) + n H(+)(out). It catalyses the reaction a plastoquinone + NADPH + (n+1) H(+)(in) = a plastoquinol + NADP(+) + n H(+)(out). NDH shuttles electrons from NAD(P)H:plastoquinone, via FMN and iron-sulfur (Fe-S) centers, to quinones in the photosynthetic chain and possibly in a chloroplast respiratory chain. The immediate electron acceptor for the enzyme in this species is believed to be plastoquinone. Couples the redox reaction to proton translocation, and thus conserves the redox energy in a proton gradient. The chain is NAD(P)H-quinone oxidoreductase subunit J, chloroplastic from Cucumis sativus (Cucumber).